A 225-amino-acid polypeptide reads, in one-letter code: Membrane protein LapB (225 aa).

The protein to H.influenzae HI_1119.

It is found in the cell membrane. The sequence is that of Membrane protein LapB (lapB) from Mannheimia haemolytica (Pasteurella haemolytica).